A 422-amino-acid polypeptide reads, in one-letter code: Adenylosuccinate synthetase (422 aa).

GTP contacts are provided by residues 11 to 17 and 39 to 41; these read GDEGKGK and GHT. Residue Asp-12 is the Proton acceptor of the active site. Asp-12 and Gly-39 together coordinate Mg(2+). IMP is bound by residues 12 to 15, 37 to 40, Thr-129, Arg-143, Asn-219, Thr-234, and Arg-298; these read DEGK and NAGH. Catalysis depends on His-40, which acts as the Proton donor. 294–300 provides a ligand contact to substrate; that stretch reads VTTGRKR. GTP is bound by residues Arg-300, 326 to 328, and 411 to 413; these read KLD and GTG.

It belongs to the adenylosuccinate synthetase family. Homodimer. The cofactor is Mg(2+).

It localises to the cytoplasm. The catalysed reaction is IMP + L-aspartate + GTP = N(6)-(1,2-dicarboxyethyl)-AMP + GDP + phosphate + 2 H(+). It participates in purine metabolism; AMP biosynthesis via de novo pathway; AMP from IMP: step 1/2. Plays an important role in the de novo pathway and in the salvage pathway of purine nucleotide biosynthesis. Catalyzes the first committed step in the biosynthesis of AMP from IMP. This is Adenylosuccinate synthetase from Talaromyces stipitatus (strain ATCC 10500 / CBS 375.48 / QM 6759 / NRRL 1006) (Penicillium stipitatum).